The primary structure comprises 314 residues: Calcium homeostasis modulator protein 4 (314 aa).

At 1 to 14 (MCPTLNNIVSSLQR) the chain is on the cytoplasmic side. Residues 15–37 (NGIFINSLIAALTIGGQQLFSSS) form a helical membrane-spanning segment. The Extracellular segment spans residues 38-48 (TFSCPCQVGKN). Cystine bridges form between Cys-41/Cys-131 and Cys-43/Cys-162. Residues 49–71 (FYYGSAFLVIPALILLVAGFALR) traverse the membrane as a helical segment. Residues 72 to 103 (SQMWTITGEYCCSCAPPYRRISPLECKLACLR) lie on the Cytoplasmic side of the membrane. The helical transmembrane segment at 104 to 129 (FFSITGRAVIAPLTWLAVTLLTGTYY) threads the bilayer. The Extracellular portion of the chain corresponds to 130–183 (ECAASEFASVDHYPMFDNVSASKREEILAGFPCCRSAPSDVILVRDEIALLHRY). The chain crosses the membrane as a helical span at residues 184–207 (QSQMLGWILITLATIAALVSCCVA). Residues 208 to 314 (KCCSPLTSLQ…DRSRGIELKP (107 aa)) are Cytoplasmic-facing.

It belongs to the CALHM family. As to quaternary structure, oligomerizes to form decameric and undecameric channels. Two hemichannels can assemble in a tail-to-tail manner to form a gap junction. In terms of tissue distribution, placenta.

It localises to the cell membrane. Functionally, may assemble to form gap junction channel-like structures involved in intercellular communication. Channel gating and ion conductance are likely regulated by membrane lipids rather than by membrane depolarization or extracellular calcium levels. This is Calcium homeostasis modulator protein 4 from Homo sapiens (Human).